Reading from the N-terminus, the 94-residue chain is Co-chaperonin GroES (94 aa).

It belongs to the GroES chaperonin family. As to quaternary structure, heptamer of 7 subunits arranged in a ring. Interacts with the chaperonin GroEL.

The protein localises to the cytoplasm. Its function is as follows. Together with the chaperonin GroEL, plays an essential role in assisting protein folding. The GroEL-GroES system forms a nano-cage that allows encapsulation of the non-native substrate proteins and provides a physical environment optimized to promote and accelerate protein folding. GroES binds to the apical surface of the GroEL ring, thereby capping the opening of the GroEL channel. This Clostridium perfringens (strain ATCC 13124 / DSM 756 / JCM 1290 / NCIMB 6125 / NCTC 8237 / Type A) protein is Co-chaperonin GroES.